The following is a 284-amino-acid chain: MVILVGGTNGLMALKVAKISGLPLCYSHVDRYPDGEKYFRFASNIDGEDVVIFNSMHPNPDEIIFETLLIAETAYSNGARSVTCVFPYFAYARSLDTVKGEALPIKTVVKVLKAAGVKKIITVDFHLQENVFGVEHVDLTGMEKLAEYCLEEFSDSFTVLAPDEKAAFWAEKFAAKANCDVVALRKIRIDAENVIIDDLRTGVEGDVVIVDDIVSTGGTVCQAARIAKRAGARRVFVACTHAILARDAMMRILESGIEDIVSTDTILSPVSHVSVADVIASALS.

ATP is bound at residue 34–36; sequence DGE. Mg(2+)-binding residues include histidine 126 and aspartate 163. Lysine 186 is a catalytic residue. D-ribose 5-phosphate is bound by residues arginine 188, aspartate 211, and 215 to 219; that span reads STGGT.

It belongs to the ribose-phosphate pyrophosphokinase family. Class III (archaeal) subfamily. Mg(2+) is required as a cofactor.

The protein resides in the cytoplasm. The catalysed reaction is D-ribose 5-phosphate + ATP = 5-phospho-alpha-D-ribose 1-diphosphate + AMP + H(+). Its pathway is metabolic intermediate biosynthesis; 5-phospho-alpha-D-ribose 1-diphosphate biosynthesis; 5-phospho-alpha-D-ribose 1-diphosphate from D-ribose 5-phosphate (route I): step 1/1. In terms of biological role, involved in the biosynthesis of the central metabolite phospho-alpha-D-ribosyl-1-pyrophosphate (PRPP) via the transfer of pyrophosphoryl group from ATP to 1-hydroxyl of ribose-5-phosphate (Rib-5-P). This is Ribose-phosphate pyrophosphokinase 1 from Archaeoglobus fulgidus (strain ATCC 49558 / DSM 4304 / JCM 9628 / NBRC 100126 / VC-16).